The primary structure comprises 28 residues: Alkaline serine protease NJP (28 aa).

Its activity is regulated as follows. Inhibited by PMSF. Not or very weakly inhibited by EDTA, EGTA, beta-mercaptoethanol, benzamidine, aprotinin, iodoacetic acid, pepstatin A and SBTI. Its function is as follows. Alkaline thrombin-like serine protease. Has fibrinolytic and fibrinogenolytic but not plasminogenolytic activity. Cleaves fibrinogen chains Aalpha, Bbeta and gamma chains in that order. Cleaves after Arg and Lys residues. In Hediste japonica (Polychaete worm), this protein is Alkaline serine protease NJP.